Here is a 114-residue protein sequence, read N- to C-terminus: UPF0342 protein LSEI_1724 (114 aa).

It belongs to the UPF0342 family.

This chain is UPF0342 protein LSEI_1724, found in Lacticaseibacillus paracasei (strain ATCC 334 / BCRC 17002 / CCUG 31169 / CIP 107868 / KCTC 3260 / NRRL B-441) (Lactobacillus paracasei).